We begin with the raw amino-acid sequence, 210 residues long: Redox-sensing transcriptional repressor Rex (210 aa).

The H-T-H motif DNA-binding region spans 17-56 (KYHRYLYELLKNDVDRISSKELSEKIGFTASQIRQDLNCF). 91–96 (GAGNIG) is an NAD(+) binding site.

It belongs to the transcriptional regulatory Rex family. Homodimer.

Its subcellular location is the cytoplasm. Functionally, modulates transcription in response to changes in cellular NADH/NAD(+) redox state. This chain is Redox-sensing transcriptional repressor Rex, found in Clostridium botulinum (strain Loch Maree / Type A3).